The sequence spans 191 residues: Potassium-transporting ATPase KdpC subunit (191 aa).

The chain crosses the membrane as a helical span at residues 8-28; sequence LFLFLLLLLVTGLAYPLLTTV.

This sequence belongs to the KdpC family. As to quaternary structure, the system is composed of three essential subunits: KdpA, KdpB and KdpC.

It is found in the cell inner membrane. Functionally, part of the high-affinity ATP-driven potassium transport (or Kdp) system, which catalyzes the hydrolysis of ATP coupled with the electrogenic transport of potassium into the cytoplasm. This subunit acts as a catalytic chaperone that increases the ATP-binding affinity of the ATP-hydrolyzing subunit KdpB by the formation of a transient KdpB/KdpC/ATP ternary complex. In Pectobacterium atrosepticum (strain SCRI 1043 / ATCC BAA-672) (Erwinia carotovora subsp. atroseptica), this protein is Potassium-transporting ATPase KdpC subunit.